Here is a 212-residue protein sequence, read N- to C-terminus: Imidazole glycerol phosphate synthase subunit HisH (212 aa).

The region spanning 1-211 is the Glutamine amidotransferase type-1 domain; the sequence is MIGVIDYGMG…KQFTQEQKVK (211 aa). Cys79 acts as the Nucleophile in catalysis. Catalysis depends on residues His186 and Glu188.

Heterodimer of HisH and HisF.

Its subcellular location is the cytoplasm. The enzyme catalyses 5-[(5-phospho-1-deoxy-D-ribulos-1-ylimino)methylamino]-1-(5-phospho-beta-D-ribosyl)imidazole-4-carboxamide + L-glutamine = D-erythro-1-(imidazol-4-yl)glycerol 3-phosphate + 5-amino-1-(5-phospho-beta-D-ribosyl)imidazole-4-carboxamide + L-glutamate + H(+). It carries out the reaction L-glutamine + H2O = L-glutamate + NH4(+). Its pathway is amino-acid biosynthesis; L-histidine biosynthesis; L-histidine from 5-phospho-alpha-D-ribose 1-diphosphate: step 5/9. Its function is as follows. IGPS catalyzes the conversion of PRFAR and glutamine to IGP, AICAR and glutamate. The HisH subunit catalyzes the hydrolysis of glutamine to glutamate and ammonia as part of the synthesis of IGP and AICAR. The resulting ammonia molecule is channeled to the active site of HisF. The sequence is that of Imidazole glycerol phosphate synthase subunit HisH from Bacillus licheniformis (strain ATCC 14580 / DSM 13 / JCM 2505 / CCUG 7422 / NBRC 12200 / NCIMB 9375 / NCTC 10341 / NRRL NRS-1264 / Gibson 46).